The sequence spans 189 residues: Small ribosomal subunit protein uS5 (189 aa).

An S5 DRBM domain is found at 22-85; sequence FVDKLVAINR…ESAKRDLIFV (64 aa).

It belongs to the universal ribosomal protein uS5 family. As to quaternary structure, part of the 30S ribosomal subunit. Contacts proteins S4 and S8.

Its function is as follows. With S4 and S12 plays an important role in translational accuracy. Located at the back of the 30S subunit body where it stabilizes the conformation of the head with respect to the body. In Agrobacterium fabrum (strain C58 / ATCC 33970) (Agrobacterium tumefaciens (strain C58)), this protein is Small ribosomal subunit protein uS5.